The following is a 720-amino-acid chain: Biotin biosynthesis bifunctional protein BioWF (720 aa).

Positions 1–39 (MRFSIKMRASARVSSSPSTSDGSSGDHTESRDRADRHIS) are disordered. The segment covering 8 to 23 (RASARVSSSPSTSDGS) has biased composition (low complexity). Residues 24-39 (SGDHTESRDRADRHIS) are compositionally biased toward basic and acidic residues. R314 is a substrate binding site. 401-402 (GY) contacts pyridoxal 5'-phosphate. H439 contacts substrate. Pyridoxal 5'-phosphate is bound by residues S488, 513–516 (DDAH), and 564–567 (TASK). K567 carries the post-translational modification N6-(pyridoxal phosphate)lysine. T684 provides a ligand contact to substrate.

The protein in the N-terminal section; belongs to the BioW family. It in the C-terminal section; belongs to the class-II pyridoxal-phosphate-dependent aminotransferase family. BioF subfamily. In terms of assembly, homodimer. The cofactor is Mg(2+). Pyridoxal 5'-phosphate is required as a cofactor.

It catalyses the reaction heptanedioate + ATP + CoA = 6-carboxyhexanoyl-CoA + AMP + diphosphate. The enzyme catalyses 6-carboxyhexanoyl-[ACP] + L-alanine + H(+) = (8S)-8-amino-7-oxononanoate + holo-[ACP] + CO2. It functions in the pathway metabolic intermediate metabolism; pimeloyl-CoA biosynthesis; pimeloyl-CoA from pimelate: step 1/1. It participates in cofactor biosynthesis; biotin biosynthesis. Its function is as follows. Catalyzes both the decarboxylative condensation of pimeloyl-[acyl-carrier protein] and L-alanine to produce 8-amino-7-oxononanoate (AON), [acyl-carrier protein], and carbon dioxide, and the transformation of pimelate into pimeloyl-CoA with concomitant hydrolysis of ATP to AMP. In Corynebacterium kroppenstedtii (strain DSM 44385 / JCM 11950 / CIP 105744 / CCUG 35717), this protein is Biotin biosynthesis bifunctional protein BioWF (bioWF).